A 256-amino-acid chain; its full sequence is Undecaprenyl-diphosphatase (256 aa).

7 consecutive transmembrane segments (helical) span residues 39–59 (PTDA…AVLV), 77–97 (RTVI…YMLF), 101–121 (FTGG…TGLM), 135–155 (ISTK…LPGV), 176–196 (LMVS…LDCL), 206–226 (LPGA…MDVL), and 233–253 (VSFS…TALP).

This sequence belongs to the UppP family.

The protein localises to the cell membrane. It catalyses the reaction di-trans,octa-cis-undecaprenyl diphosphate + H2O = di-trans,octa-cis-undecaprenyl phosphate + phosphate + H(+). In terms of biological role, catalyzes the dephosphorylation of undecaprenyl diphosphate (UPP). The polypeptide is Undecaprenyl-diphosphatase (Methanothrix thermoacetophila (strain DSM 6194 / JCM 14653 / NBRC 101360 / PT) (Methanosaeta thermophila)).